The chain runs to 227 residues: Deoxyribose-phosphate aldolase (227 aa).

Asp96 acts as the Proton donor/acceptor in catalysis. Lys158 (schiff-base intermediate with acetaldehyde) is an active-site residue. Lys187 serves as the catalytic Proton donor/acceptor.

Belongs to the DeoC/FbaB aldolase family. DeoC type 1 subfamily.

It localises to the cytoplasm. It catalyses the reaction 2-deoxy-D-ribose 5-phosphate = D-glyceraldehyde 3-phosphate + acetaldehyde. The protein operates within carbohydrate degradation; 2-deoxy-D-ribose 1-phosphate degradation; D-glyceraldehyde 3-phosphate and acetaldehyde from 2-deoxy-alpha-D-ribose 1-phosphate: step 2/2. Its function is as follows. Catalyzes a reversible aldol reaction between acetaldehyde and D-glyceraldehyde 3-phosphate to generate 2-deoxy-D-ribose 5-phosphate. The polypeptide is Deoxyribose-phosphate aldolase (Desulfotalea psychrophila (strain LSv54 / DSM 12343)).